The following is a 461-amino-acid chain: Cysteine--tRNA ligase (461 aa).

Cysteine 28 is a Zn(2+) binding site. Residues 30-40 (ITVYDLCHIGH) carry the 'HIGH' region motif. Zn(2+) contacts are provided by cysteine 209, histidine 234, and glutamate 238. The 'KMSKS' region motif lies at 266–270 (KMSKS). Lysine 269 serves as a coordination point for ATP.

The protein belongs to the class-I aminoacyl-tRNA synthetase family. As to quaternary structure, monomer. Zn(2+) is required as a cofactor.

Its subcellular location is the cytoplasm. It catalyses the reaction tRNA(Cys) + L-cysteine + ATP = L-cysteinyl-tRNA(Cys) + AMP + diphosphate. This Shigella flexneri protein is Cysteine--tRNA ligase.